The following is a 451-amino-acid chain: NADP-specific glutamate dehydrogenase (451 aa).

Lysine 113 is an active-site residue. Position 252 is a phosphoserine (serine 252).

This sequence belongs to the Glu/Leu/Phe/Val dehydrogenases family. In terms of assembly, homohexamer.

The catalysed reaction is L-glutamate + NADP(+) + H2O = 2-oxoglutarate + NH4(+) + NADPH + H(+). This is NADP-specific glutamate dehydrogenase (gdh1) from Schizosaccharomyces pombe (strain 972 / ATCC 24843) (Fission yeast).